Consider the following 86-residue polypeptide: Cytochrome c oxidase subunit 6B1 (86 aa).

Position 2 is an N-acetylalanine (Ala2). The CHCH domain occupies 27-73 (TRNCWQNYLDFHRCEKAMTAKGGDVSVCEWYRRVYKSLCPISWVSTW). Positions 30 to 40 (CWQNYLDFHRC) match the Cx9C motif motif. 2 disulfides stabilise this stretch: Cys30–Cys65 and Cys40–Cys54. The Cx10C motif motif lies at 54–65 (CEWYRRVYKSLC). The residue at position 62 (Lys62) is an N6-acetyllysine.

This sequence belongs to the cytochrome c oxidase subunit 6B family. In terms of assembly, component of the cytochrome c oxidase (complex IV, CIV), a multisubunit enzyme composed of 14 subunits. The complex is composed of a catalytic core of 3 subunits MT-CO1, MT-CO2 and MT-CO3, encoded in the mitochondrial DNA, and 11 supernumerary subunits COX4I1 (or COX4I2), COX5A, COX5B, COX6A2 (or COX6A1), COX6B1 (or COX6B2), COX6C, COX7A1 (or COX7A2), COX7B, COX7C, COX8B and NDUFA4, which are encoded in the nuclear genome. The complex exists as a monomer or a dimer and forms supercomplexes (SCs) in the inner mitochondrial membrane with NADH-ubiquinone oxidoreductase (complex I, CI) and ubiquinol-cytochrome c oxidoreductase (cytochrome b-c1 complex, complex III, CIII), resulting in different assemblies (supercomplex SCI(1)III(2)IV(1) and megacomplex MCI(2)III(2)IV(2)).

The protein resides in the mitochondrion inner membrane. It participates in energy metabolism; oxidative phosphorylation. Component of the cytochrome c oxidase, the last enzyme in the mitochondrial electron transport chain which drives oxidative phosphorylation. The respiratory chain contains 3 multisubunit complexes succinate dehydrogenase (complex II, CII), ubiquinol-cytochrome c oxidoreductase (cytochrome b-c1 complex, complex III, CIII) and cytochrome c oxidase (complex IV, CIV), that cooperate to transfer electrons derived from NADH and succinate to molecular oxygen, creating an electrochemical gradient over the inner membrane that drives transmembrane transport and the ATP synthase. Cytochrome c oxidase is the component of the respiratory chain that catalyzes the reduction of oxygen to water. Electrons originating from reduced cytochrome c in the intermembrane space (IMS) are transferred via the dinuclear copper A center (CU(A)) of subunit 2 and heme A of subunit 1 to the active site in subunit 1, a binuclear center (BNC) formed by heme A3 and copper B (CU(B)). The BNC reduces molecular oxygen to 2 water molecules using 4 electrons from cytochrome c in the IMS and 4 protons from the mitochondrial matrix. The sequence is that of Cytochrome c oxidase subunit 6B1 (COX6B1) from Bos taurus (Bovine).